Reading from the N-terminus, the 134-residue chain is MVFAAWYLKFAGFVALIFSIIGGSMASSLVLPHASELKGVWQLSDKHQQCDVLLTDHPLPEGSIWSLNGDNDCLAYMFGEVPAGWRPTPDGLTITDEQGSGLAFFAHEPDGWFARFADGRELMIKPNKTSKKNE.

The first 26 residues, 1-26 (MVFAAWYLKFAGFVALIFSIIGGSMA), serve as a signal peptide directing secretion. The cysteines at positions 50 and 73 are disulfide-linked.

Belongs to the protease inhibitor I38 family.

Its subcellular location is the periplasm. In terms of biological role, inhibitor of the alkaline protease. In Photorhabdus laumondii subsp. laumondii (strain DSM 15139 / CIP 105565 / TT01) (Photorhabdus luminescens subsp. laumondii), this protein is Alkaline proteinase inhibitor (inh).